The sequence spans 172 residues: Translation initiation factor IF-3 (172 aa).

It belongs to the IF-3 family. In terms of assembly, monomer.

The protein resides in the cytoplasm. Its function is as follows. IF-3 binds to the 30S ribosomal subunit and shifts the equilibrium between 70S ribosomes and their 50S and 30S subunits in favor of the free subunits, thus enhancing the availability of 30S subunits on which protein synthesis initiation begins. The sequence is that of Translation initiation factor IF-3 from Bartonella henselae (strain ATCC 49882 / DSM 28221 / CCUG 30454 / Houston 1) (Rochalimaea henselae).